Here is a 1360-residue protein sequence, read N- to C-terminus: DNA mismatch repair protein Msh6 (1360 aa).

A disordered region spans residues 1–84 (MSRQSTLYSF…GLRRSVAPAA (84 aa)). Residues S14, S41, and S43 each carry the phosphoserine modification. The span at 33-51 (RAAAAPGASPSPGGDAAWS) shows a compositional bias: low complexity. K70 is modified (N6-acetyllysine). Phosphoserine is present on residues S79, S91, S137, S200, S219, and S227. One can recognise a PWWP domain in the interval 92–154 (PGDLVWAKME…KRLLKPYTGS (63 aa)). A disordered region spans residues 195–362 (VCDEPSEPEE…SGGGDDSSRP (168 aa)). Acidic residues-rich tracts occupy residues 198 to 209 (EPSEPEEEEEME) and 219 to 230 (SEEDNEIESEEE). A compositionally biased stretch (basic residues) spans 240–249 (RSSRQIKKRR). S252, S254, S256, and S261 each carry phosphoserine. Residues 263 to 273 (VEFKPDTKEEG) show a composition bias toward basic and acidic residues. At T269 the chain carries Phosphothreonine. S274, S275, S279, S280, and S309 each carry phosphoserine. Residues 320–351 (PSATKQATSISSETKNTLRAFSAPQNSESQAH) show a composition bias toward polar residues. Phosphothreonine is present on T488. At K504 the chain carries N6-acetyllysine. Residues S830 and S935 each carry the phosphoserine modification. Residue T1010 is modified to Phosphothreonine. 1134-1141 (GPNMGGKS) is a binding site for ATP.

The protein belongs to the DNA mismatch repair MutS family. Component of the DNA mismatch repair (MMR) complex composed at least of MSH2, MSH3, MSH6, PMS1 and MLH1. Heterodimer consisting of MSH2-MSH6 (MutS alpha). Forms a ternary complex with MutL alpha (MLH1-PMS1). Interacts with MCM9. Part of the BRCA1-associated genome surveillance complex (BASC), which contains BRCA1, MSH2, MSH6, MLH1, ATM, BLM, PMS2 and the RAD50-MRE11-NBS1 protein complex. This association could be a dynamic process changing throughout the cell cycle and within subnuclear domains. In terms of assembly, (Microbial infection) Interacts with herpes simplex virus 1 protein UL12. In terms of processing, the N-terminus is blocked. Phosphorylated by PRKCZ, which may prevent MutS alpha degradation by the ubiquitin-proteasome pathway.

It localises to the nucleus. The protein resides in the chromosome. In terms of biological role, component of the post-replicative DNA mismatch repair system (MMR). Heterodimerizes with MSH2 to form MutS alpha, which binds to DNA mismatches thereby initiating DNA repair. When bound, MutS alpha bends the DNA helix and shields approximately 20 base pairs, and recognizes single base mismatches and dinucleotide insertion-deletion loops (IDL) in the DNA. After mismatch binding, forms a ternary complex with the MutL alpha heterodimer, which is thought to be responsible for directing the downstream MMR events, including strand discrimination, excision, and resynthesis. ATP binding and hydrolysis play a pivotal role in mismatch repair functions. The ATPase activity associated with MutS alpha regulates binding similar to a molecular switch: mismatched DNA provokes ADP--&gt;ATP exchange, resulting in a discernible conformational transition that converts MutS alpha into a sliding clamp capable of hydrolysis-independent diffusion along the DNA backbone. This transition is crucial for mismatch repair. MutS alpha may also play a role in DNA homologous recombination repair. Recruited on chromatin in G1 and early S phase via its PWWP domain that specifically binds trimethylated 'Lys-36' of histone H3 (H3K36me3): early recruitment to chromatin to be replicated allowing a quick identification of mismatch repair to initiate the DNA mismatch repair reaction. This is DNA mismatch repair protein Msh6 from Homo sapiens (Human).